A 179-amino-acid polypeptide reads, in one-letter code: Large ribosomal subunit protein uL5 (179 aa).

The protein belongs to the universal ribosomal protein uL5 family. In terms of assembly, part of the 50S ribosomal subunit; part of the 5S rRNA/L5/L18/L25 subcomplex. Contacts the 5S rRNA and the P site tRNA. Forms a bridge to the 30S subunit in the 70S ribosome.

Functionally, this is one of the proteins that bind and probably mediate the attachment of the 5S RNA into the large ribosomal subunit, where it forms part of the central protuberance. In the 70S ribosome it contacts protein S13 of the 30S subunit (bridge B1b), connecting the 2 subunits; this bridge is implicated in subunit movement. Contacts the P site tRNA; the 5S rRNA and some of its associated proteins might help stabilize positioning of ribosome-bound tRNAs. The chain is Large ribosomal subunit protein uL5 from Shewanella pealeana (strain ATCC 700345 / ANG-SQ1).